The following is a 208-amino-acid chain: Imidazoleglycerol-phosphate dehydratase (208 aa).

This sequence belongs to the imidazoleglycerol-phosphate dehydratase family.

Its subcellular location is the cytoplasm. It carries out the reaction D-erythro-1-(imidazol-4-yl)glycerol 3-phosphate = 3-(imidazol-4-yl)-2-oxopropyl phosphate + H2O. It functions in the pathway amino-acid biosynthesis; L-histidine biosynthesis; L-histidine from 5-phospho-alpha-D-ribose 1-diphosphate: step 6/9. In Hyphomonas neptunium (strain ATCC 15444), this protein is Imidazoleglycerol-phosphate dehydratase.